The primary structure comprises 110 residues: Cell division protein FtsB (110 aa).

Topologically, residues 1-3 (MRL) are cytoplasmic. Residues 4 to 21 (IILCLAALVLLIQFPLWL) form a helical membrane-spanning segment. Residues 22-110 (GKGGWLRVWD…PPKIEPKEKR (89 aa)) lie on the Periplasmic side of the membrane. Residues 31–64 (DLDQQVIAAQKKNDELRARNAKLNSEVQDLKEGT) adopt a coiled-coil conformation.

It belongs to the FtsB family. Part of a complex composed of FtsB, FtsL and FtsQ.

Its subcellular location is the cell inner membrane. Essential cell division protein. May link together the upstream cell division proteins, which are predominantly cytoplasmic, with the downstream cell division proteins, which are predominantly periplasmic. This chain is Cell division protein FtsB, found in Herminiimonas arsenicoxydans.